Here is a 95-residue protein sequence, read N- to C-terminus: Beta-alanine degradation protein BauB (95 aa).

One can recognise a Cupin type-2 domain in the interval 23-90 (WRFAPGAETG…NASAHEVVFV (68 aa)).

Involved in the degradation of beta-alanine. This is Beta-alanine degradation protein BauB (bauB) from Pseudomonas aeruginosa (strain ATCC 15692 / DSM 22644 / CIP 104116 / JCM 14847 / LMG 12228 / 1C / PRS 101 / PAO1).